The chain runs to 392 residues: Chorismate synthase (392 aa).

Residues Arg39 and Arg45 each contribute to the NADP(+) site. Residues 131 to 133 (RSS), 255 to 256 (NA), Gly300, 315 to 319 (KPIPT), and Arg341 contribute to the FMN site.

The protein belongs to the chorismate synthase family. Homotetramer. The cofactor is FMNH2.

It carries out the reaction 5-O-(1-carboxyvinyl)-3-phosphoshikimate = chorismate + phosphate. The protein operates within metabolic intermediate biosynthesis; chorismate biosynthesis; chorismate from D-erythrose 4-phosphate and phosphoenolpyruvate: step 7/7. In terms of biological role, catalyzes the anti-1,4-elimination of the C-3 phosphate and the C-6 proR hydrogen from 5-enolpyruvylshikimate-3-phosphate (EPSP) to yield chorismate, which is the branch point compound that serves as the starting substrate for the three terminal pathways of aromatic amino acid biosynthesis. This reaction introduces a second double bond into the aromatic ring system. This is Chorismate synthase from Leuconostoc mesenteroides subsp. mesenteroides (strain ATCC 8293 / DSM 20343 / BCRC 11652 / CCM 1803 / JCM 6124 / NCDO 523 / NBRC 100496 / NCIMB 8023 / NCTC 12954 / NRRL B-1118 / 37Y).